Consider the following 71-residue polypeptide: Equinin B (71 aa).

The first 11 residues, 1–11, serve as a signal peptide directing secretion; it reads MAVIMVDQAEG. Residues 46-71 constitute a propeptide that is removed on maturation; the sequence is GDEPQQMALDDESDPLVILPNNYNDY.

Post-translationally, contains 4 disulfide bonds.

It localises to the secreted. The protein localises to the target cell membrane. In terms of biological role, antimicrobial peptide with inhibitory activity against both Gram-positive and Gram-negative bacteria (E.coli (MIC=0.25 ug/ml), M.lysodeikticus (MIC=0.25 ug/ml), and V.alginolyticus (MIC=0.25 ug/ml)). Does not show hemolytic activity. This Actinia equina (Beadlet anemone) protein is Equinin B.